The sequence spans 129 residues: MSASLVRATVRAVSKRKLQPTRAALTLTPSAVNKIKQLLKDKPEHVGVKVGVRTRGCNGLSYTLEYTKTKGDSDEEVIQDGVRVFIEKKAQLTLLGTEMDYVEDKLSSEFVFNNPNIKGTCGCGESFNI.

The N-terminal 12 residues, 1–12 (MSASLVRATVRA), are a transit peptide targeting the mitochondrion. Cys-57, Cys-121, and Cys-123 together coordinate Fe cation.

This sequence belongs to the HesB/IscA family. Interacts with CRY2, but not with CRY1 (in vitro).

The protein resides in the mitochondrion. Its function is as follows. Involved in the maturation of mitochondrial 4Fe-4S proteins functioning late in the iron-sulfur cluster assembly pathway. Probably involved in the binding of an intermediate of Fe/S cluster assembly. This chain is Iron-sulfur cluster assembly 1 homolog, mitochondrial (ISCA1), found in Bos taurus (Bovine).